Here is a 2624-residue protein sequence, read N- to C-terminus: Transcription factor TFIIIB component B'' homolog (2624 aa).

Positions 1 to 142 are disordered; that stretch reads MFRRARLSVK…TKEKQPCSDR (142 aa). The segment at 1–299 is interaction with ZBTB43; sequence MFRRARLSVK…TYSSFRKNYY (299 aa). The segment covering 63–77 has biased composition (basic and acidic residues); it reads PQEKAPRSSTEKTGG. The segment covering 99 to 119 has biased composition (low complexity); sequence SSTSSLVKSSVSVPSESHPLS. Residues 120-132 show a composition bias toward polar residues; the sequence is TINQEAPQPTATS. A compositionally biased stretch (basic and acidic residues) spans 133 to 142; that stretch reads TKEKQPCSDR. The stretch at 144-177 forms a coiled coil; sequence RIYKAQKLREMLKEELRKEKKQWKNKYAINESQR. A disordered region spans residues 193-241; that stretch reads LPDNNPMTSSLEQEKKTEKPSTPVQTREQEGKSTPNAEDNEMEEETDDG. Positions 212–229 are enriched in polar residues; sequence PSTPVQTREQEGKSTPNA. A compositionally biased stretch (acidic residues) spans 230-240; the sequence is EDNEMEEETDD. The region spanning 295–345 is the Myb-like domain; that stretch reads RKNYYSKPWSNKETDMFFLAISMVGTDFSMIGQLFPHRARIEIKNKFKREE. The required for phosphorylation by CSNK2A1 stretch occupies residues 355-470; sequence AFQEKRPFDF…QKKRRRKKQD (116 aa). Disordered stretches follow at residues 379–449, 544–567, 606–663, and 729–759; these read EKRK…SRED, LSLS…TSDL, ENVK…MNTL, and EEIG…SRKD. Residues 397-407 show a composition bias toward basic residues; that stretch reads TKPRKNVKVKK. The segment covering 552-565 has biased composition (low complexity); sequence ATSVATESSESSTS. Basic and acidic residues-rich tracts occupy residues 637 to 663 and 736 to 759; these read TESE…MNTL and EKNE…SRKD. The 1; approximate repeat unit spans residues 823–877; the sequence is GRREISSKEEVLEKILVSGEMAAALRETVRLDTSPKEMVPAEINTKEMQSDLKET. The tract at residues 823–1327 is 9 X 55 AA repeats of G-R-R-X-I-S-P-X-E-N-G-X-E-E-V-K-P-X-X-E-M-E-T-D-L-K-X-T-G-R-E-X-X-X-R-E-K-T-X-E-X-X-D-A-X-E-E-I-D-X-D-L-E-E-T; that stretch reads GRREISSKEE…PRENELEETS (505 aa). A run of 6 repeats spans residues 878–932, 933–987, 988–1040, 1041–1094, 1095–1148, and 1149–1203. A Phosphothreonine modification is found at T915. 2 stretches are compositionally biased toward basic and acidic residues: residues 930–957 and 979–1006; these read EEAG…ETDL and EIDK…KPVD. The tract at residues 930–1222 is disordered; the sequence is EEAGRREISP…GPEEVKPVGK (293 aa). Residues 1030-1041 are compositionally biased toward acidic residues; it reads DATEEIDLEETE. Residues 1052-1079 are compositionally biased toward basic and acidic residues; it reads EEVKPLGEMETDLKATGRDSFPRGKTPE. Positions 1078-1103 form a coiled coil; sequence PEVIDAIEEIEIDLEETEREISPQEN. Positions 1082–1095 are enriched in acidic residues; sequence DAIEEIEIDLEETE. Positions 1120 to 1133 are enriched in basic and acidic residues; the sequence is ATGREISPREKTPE. Acidic residues predominate over residues 1136 to 1145; it reads DATEEIDKDL. Basic and acidic residues predominate over residues 1161 to 1190; sequence EEVKPVDEMETDLKTTGREGSSREKTREVI. Positions 1194–1204 are enriched in acidic residues; it reads EVIETDLEETE. One copy of the 8; approximate repeat lies at 1204-1257; sequence EREISPQENGPEEVKPVGKMETDLKEIREEISQREKVLAEFSAIREKEIDLKET. A coiled-coil region spans residues 1223-1284; that stretch reads METDLKEIRE…VEEMEADLKE (62 aa). The 9; approximate repeat unit spans residues 1258–1327; sequence GKRDIPIMEK…PRENELEETS (70 aa). Residues 1306-1321 are compositionally biased toward basic and acidic residues; the sequence is AELKQTGKTDISPREN. Disordered stretches follow at residues 1306-1348, 1365-1440, 1519-1543, 1684-1722, 1819-1863, 2130-2164, 2181-2200, 2207-2241, 2444-2501, and 2519-2566; these read AELK…SAVP, TPVE…RFKR, TERN…VQKN, KAKP…LQKG, STSE…ASKA, GAEM…ENKD, SEVN…QEVH, VASS…GDSV, FQSR…SRPG, and SDEP…PSPS. Residues 1326-1344 show a composition bias toward polar residues; it reads TSTSRQTDTHLMQSGSNDF. Positions 1366 to 1378 are enriched in basic and acidic residues; that stretch reads PVEEKRNSEKEVS. Polar residues-rich tracts occupy residues 1379 to 1390, 1411 to 1421, and 1519 to 1529; these read SHFSHFKISSQT, SDINLSKSLPQ, and TERNLSPSNSC. Positions 1695 to 1719 are enriched in basic and acidic residues; sequence KKEEPVLEKVTTDQSKEGKPEDHLL. Residues 1844–1853 are compositionally biased toward basic residues; sequence RGSKRVRGKT. Basic and acidic residues predominate over residues 2131–2151; that stretch reads AEMETQRETEKNASKATELEN. A compositionally biased stretch (basic and acidic residues) spans 2470-2479; sequence VSDKEERTDA. Low complexity predominate over residues 2488-2498; sequence SRTSSSKASLS. Positions 2526–2544 are enriched in basic residues; that stretch reads HSKKRLKPLIPGLRKKLKR.

As to quaternary structure, component of TFIIIB complex. The TFIIIB complex has two activities, alpha and beta. The TFIIIB-alpha and TFIIIB-beta activities are required for transcription of genes with TFIIIC-bound internal promoters and PSE transcription factor-bound external promoters, respectively. The TFIIIB-alpha activity complex is composed of TBP, BDP1, and a complex containing both BRF2 and at least four stably associated proteins; YY1 facilitates the formation of TFIIIB-alpha activity complex. The TFIIIB-beta activity complex is composed of TBP, BDP1, and BRF1. Interacts with BRF1; this interaction diminishes during mitosis resulting in the release of BDP1 from chromosomal templates. Component of TFIIIC complex. The TFIIIC complex has two activities, C1 and C2. The TFIIIC2 activity complex is only required for transcription of the 'classical' pol III genes whereas the TFIIIC1 activity complex is required for transcription of all pol III genes. The TFIIIC1 activity complex is composed at least of BDP1. Interacts with ZBTB43. Post-translationally, phosphorylated by CSNK2A1 during mitosis, resulting in its release from chromatin and suppression of polymerase III transcription. Isoform 2 is highly expressed in cerebellum.

The protein resides in the nucleus. Functionally, general activator of RNA polymerase III transcription. Requires for transcription from all three types of polymerase III promoters. Requires for transcription of genes with internal promoter elements and with promoter elements upstream of the initiation site. This chain is Transcription factor TFIIIB component B'' homolog (BDP1), found in Homo sapiens (Human).